The chain runs to 990 residues: F-box/LRR-repeat protein 15 (990 aa).

An F-box domain is found at 190-236; sequence FEVHIDLTDDLLHMVFSFLNHVDLCRSAMVCRQWRVASAHEDFWRVL. LRR repeat units lie at residues 237–258, 280–303, 317–341, 348–373, 397–423, 441–465, 466–477, 478–503, 519–542, 550–574, 589–612, 614–633, 640–652, 653–678, 734–756, 758–782, 785–809, 813–839, 882–893, 894–914, 915–937, and 949–973; these read NFEN…YPNA, LRNL…ALGE, LGNG…KCRV, CPQL…LLQL, LESL…CANL, LPML…WIAN, SPALEVLELDNC, NLLT…KFTD, CPAL…KQEN, CHSL…IFSD, CESL…GCRA, TSLE…GCDH, QPVA…LGIC, PKLS…VLSE, LPNL…VFKS, IQLK…LYKE, LPAL…LLAC, LTHL…LFDY, FYHLSTLNLSLS, VNLK…LSNC, CSLE…SCNM, and CSSL…KFRT.

The sequence is that of F-box/LRR-repeat protein 15 (FBL15) from Arabidopsis thaliana (Mouse-ear cress).